The chain runs to 453 residues: Protein vestigial (453 aa).

A disordered region spans residues 145 to 279 (AAGHSLHSSH…GGGLAGSGQG (135 aa)). The span at 151-177 (HSSHRTHAHSLAHAHTHPHSHTHTHTH) shows a compositional bias: basic residues. Residues 178–193 (QTKEEDLIVPRSEAEA) show a composition bias toward basic and acidic residues. Composition is skewed to gly residues over residues 227–253 (HGGGGATGGPSSAGGTGSGGGDGGGTG) and 267–278 (GSGGGGLAGSGQ). The tract at residues 279–335 (GQAQYLSASCVVFTNYSGDTASQVDEHFSRALNYNNKDSKESSSPMSNRNFPPSFWN) is ser-rich sd binding domain.

The Ser-rich protein domain within the C-terminal region interacts with the C-terminus of sd to form a complex which acts as a selector for wing development. Interacts with Dhfr. As to expression, expressed in the developing wing primordia initially along the D/V wing boundary, and by the late third larval instar, maximal expression is seen in cells at the D/V wing disk boundary. Less expression is seen in cells located farther from this boundary.

It localises to the nucleus. Functionally, involved in determining which thoracic imaginal disk cells will form wings and halteres, perhaps by interacting with other nuclear regulatory proteins. When in combination with scalloped (sd), it acts as a transcriptional activation complex that regulates gene expression in the wing. Binding to sd switches the DNA target selectivity of sd. Required and sufficient for cell proliferation at the dorsal/ventral (D/V) boundary of the wing imaginal disk. Also required for cell proliferation in the wing imaginal disk, mediated via activation of E2f. By interacting with Dhfr, may control genes involved in DNA replication. The protein is Protein vestigial (vg) of Drosophila melanogaster (Fruit fly).